The primary structure comprises 349 residues: Protein-glutamate methylesterase/protein-glutamine glutaminase (349 aa).

The 118-residue stretch at 5 to 122 (RVLCVDDSAL…REGMLAYSEL (118 aa)) folds into the Response regulatory domain. Aspartate 56 bears the 4-aspartylphosphate mark. One can recognise a CheB-type methylesterase domain in the interval 152–344 (LLSSEKLIAI…QRMLAQISSG (193 aa)). Catalysis depends on residues serine 164, histidine 190, and aspartate 286.

The protein belongs to the CheB family. In terms of processing, phosphorylated by CheA. Phosphorylation of the N-terminal regulatory domain activates the methylesterase activity.

The protein resides in the cytoplasm. It carries out the reaction [protein]-L-glutamate 5-O-methyl ester + H2O = L-glutamyl-[protein] + methanol + H(+). It catalyses the reaction L-glutaminyl-[protein] + H2O = L-glutamyl-[protein] + NH4(+). In terms of biological role, involved in chemotaxis. Part of a chemotaxis signal transduction system that modulates chemotaxis in response to various stimuli. Catalyzes the demethylation of specific methylglutamate residues introduced into the chemoreceptors (methyl-accepting chemotaxis proteins or MCP) by CheR. Also mediates the irreversible deamidation of specific glutamine residues to glutamic acid. This chain is Protein-glutamate methylesterase/protein-glutamine glutaminase, found in Yersinia pestis bv. Antiqua (strain Antiqua).